Consider the following 224-residue polypeptide: Deoxyribose-phosphate aldolase (224 aa).

The active-site Proton donor/acceptor is the Asp93. The active-site Schiff-base intermediate with acetaldehyde is the Lys159. Residue Lys189 is the Proton donor/acceptor of the active site.

This sequence belongs to the DeoC/FbaB aldolase family. DeoC type 1 subfamily.

It localises to the cytoplasm. It catalyses the reaction 2-deoxy-D-ribose 5-phosphate = D-glyceraldehyde 3-phosphate + acetaldehyde. It functions in the pathway carbohydrate degradation; 2-deoxy-D-ribose 1-phosphate degradation; D-glyceraldehyde 3-phosphate and acetaldehyde from 2-deoxy-alpha-D-ribose 1-phosphate: step 2/2. Catalyzes a reversible aldol reaction between acetaldehyde and D-glyceraldehyde 3-phosphate to generate 2-deoxy-D-ribose 5-phosphate. This Mycobacterium bovis (strain ATCC BAA-935 / AF2122/97) protein is Deoxyribose-phosphate aldolase.